We begin with the raw amino-acid sequence, 164 residues long: Seripauperin-21 (164 aa).

It belongs to the SRP1/TIP1 family. Seripauperin subfamily.

This is Seripauperin-21 (PAU21) from Saccharomyces cerevisiae (strain ATCC 204508 / S288c) (Baker's yeast).